The sequence spans 287 residues: MKKKNHKYRGKKLNRGESPNFSGQHLMHNKKLIEEIVDRANISIDDTVLELGAGKGALTTVLSQKAGKVLAVENDSKFVDILTRKTAQHSNTKIIHQDIMKIHLPKEKFVVVSNIPYAITTPIMKMLLNNPASGFQKGIIVMEKGAAKRFTSKFIKNSYVLAWRMWFDIGIVREISKEHFSPPPKVDSAMVRITRKKDAPLSHKHYIAFRGLAEYALKEPNIPLCVRLRGIFTPRQMKHLRKSLKINNEKTVGTLTENQWAVIFNTMTQYVMHHKWPRANKRKPGEI.

Positions 1 to 13 are enriched in basic residues; that stretch reads MKKKNHKYRGKKL. The tract at residues 1–21 is disordered; that stretch reads MKKKNHKYRGKKLNRGESPNF. Positions 25, 27, 52, 73, 98, and 114 each coordinate S-adenosyl-L-methionine.

It belongs to the class I-like SAM-binding methyltransferase superfamily. rRNA adenine N(6)-methyltransferase family. As to quaternary structure, homodimer.

In terms of biological role, involved in erythromycin resistance. The protein is rRNA adenine N-6-methyltransferase (ermJ) of Bacillus anthracis.